The primary structure comprises 178 residues: C-phycoerythrin class 2 subunit beta (178 aa).

The phycourobilin site is built by cysteine 50 and cysteine 61. The (2R,3E)-phycoerythrobilin site is built by cysteine 82 and cysteine 159.

This sequence belongs to the phycobiliprotein family. In terms of assembly, heterodimer of an alpha and a beta chain. Post-translationally, contains two covalently linked phycoerythrobilin chromophores and one covalently linked phycourobilin chromophore.

The protein resides in the cellular thylakoid membrane. In terms of biological role, light-harvesting photosynthetic bile pigment-protein from the phycobiliprotein complex. This chain is C-phycoerythrin class 2 subunit beta (mpeB), found in Synechococcus sp. (strain WH8103).